The following is a 631-amino-acid chain: Chaperone protein DnaK (631 aa).

Residue Thr198 is modified to Phosphothreonine; by autocatalysis. The interval 598–631 (YSAQQGGEQPGAAKKDDVVDAEFTEVDDDKKKSA) is disordered.

It belongs to the heat shock protein 70 family.

In terms of biological role, acts as a chaperone. In Azorhizobium caulinodans (strain ATCC 43989 / DSM 5975 / JCM 20966 / LMG 6465 / NBRC 14845 / NCIMB 13405 / ORS 571), this protein is Chaperone protein DnaK.